Here is a 1118-residue protein sequence, read N- to C-terminus: Constitutive coactivator of PPAR-gamma-like protein 1 (1118 aa).

The interaction with YES1, SRC and FYN stretch occupies residues 339–405 (PPHYLAARPG…SLSEPAPLTL (67 aa)). Residues 374–533 (AKPVAPQVPS…GTVQPIPCLL (160 aa)) form a disordered region. Residues 376-396 (PVAPQVPSPGGAPGQGPYPYS) show a composition bias toward low complexity. Composition is skewed to polar residues over residues 405–420 (LDTS…SYSN) and 435–447 (SPIN…SPNH). Residues 481-502 (GWEKTGSHSEPQARGDPGDQTK) show a composition bias toward basic and acidic residues. Positions 503 to 514 (AEGSSTASSGSQ) are enriched in polar residues. The residue at position 655 (T655) is a Phosphothreonine. Residues 829 to 1118 (ADQAAKVEKM…LEAAVLNKEE (290 aa)) form an RNA binding region. Omega-N-methylarginine occurs at positions 873, 884, and 886. Residues 921 to 945 (AFSGSDSSRTSKSQGGVQPIPSQGG) form a disordered region. The segment covering 924–936 (GSDSSRTSKSQGG) has biased composition (polar residues). K932 bears the N6-acetyllysine mark. S960 bears the Phosphoserine mark. 2 positions are modified to omega-N-methylarginine: R982 and R986. S1023 is modified (phosphoserine). The segment at 1025–1102 (EEVAKELKSK…HLNALSTDSA (78 aa)) is disordered. Basic and acidic residues predominate over residues 1026-1037 (EVAKELKSKSGE). Positions 1038 to 1051 (SKSSAMSSDGSLAE) are enriched in low complexity. Phosphoserine occurs at positions 1044, 1045, and 1048. Polar residues predominate over residues 1076-1101 (HSESALNNDSKTCNTNPHLNALSTDS).

It belongs to the constitutive coactivator of PPAR-gamma family. As to quaternary structure, interacts with PURA. Interacts with SRC family protein kinases YES1, SRC and FYN. Upon tyrosine phosphorylation, interacts with PIK3R1. Interacts with IGF2BP1/IMP-1 in an RNA-dependent manner. Arg-982 is dimethylated, probably to asymmetric dimethylarginine. In terms of processing, phosphorylated on tyrosine by SRC family protein kinases upon oxidative stress, for instance following UV irradiation. As to expression, widely expressed. In gastric mucosa, detected in the bottom region of the foveolar epithelium (at protein level).

The protein resides in the cytoplasm. The protein localises to the cell membrane. Functionally, component of the oxidative stress-induced survival signaling. May regulate the activation of SRC family protein kinases. May act as a scaffolding protein enabling SRC family protein kinases to phosphorylate and activate PI3-kinase. Binds IGF2 RNA and promotes the production of IGF2 protein. The polypeptide is Constitutive coactivator of PPAR-gamma-like protein 1 (FAM120A) (Homo sapiens (Human)).